Reading from the N-terminus, the 387-residue chain is 3-ketoacyl-CoA thiolase (387 aa).

Cys91 acts as the Acyl-thioester intermediate in catalysis. Active-site proton acceptor residues include His343 and Cys373.

The protein belongs to the thiolase-like superfamily. Thiolase family. As to quaternary structure, heterotetramer of two alpha chains (FadB) and two beta chains (FadA).

It localises to the cytoplasm. It catalyses the reaction an acyl-CoA + acetyl-CoA = a 3-oxoacyl-CoA + CoA. Its pathway is lipid metabolism; fatty acid beta-oxidation. Functionally, catalyzes the final step of fatty acid oxidation in which acetyl-CoA is released and the CoA ester of a fatty acid two carbons shorter is formed. The polypeptide is 3-ketoacyl-CoA thiolase (Shigella sonnei (strain Ss046)).